A 358-amino-acid polypeptide reads, in one-letter code: Heme A synthase (358 aa).

8 helical membrane passes run Leu-25–Gly-45, Leu-111–Gly-131, Met-141–Ser-161, Ile-176–Val-196, Phe-210–Gly-230, Val-269–Val-289, Thr-304–Met-324, and Ala-326–Val-346. Heme is bound at residue His-273. His-334 lines the heme pocket.

It belongs to the COX15/CtaA family. Type 2 subfamily. In terms of assembly, interacts with CtaB. It depends on heme b as a cofactor.

It is found in the cell membrane. It catalyses the reaction Fe(II)-heme o + 2 A + H2O = Fe(II)-heme a + 2 AH2. It participates in porphyrin-containing compound metabolism; heme A biosynthesis; heme A from heme O: step 1/1. Functionally, catalyzes the conversion of heme O to heme A by two successive hydroxylations of the methyl group at C8. The first hydroxylation forms heme I, the second hydroxylation results in an unstable dihydroxymethyl group, which spontaneously dehydrates, resulting in the formyl group of heme A. This chain is Heme A synthase, found in Brucella suis (strain ATCC 23445 / NCTC 10510).